The chain runs to 181 residues: Mytilin-1 (181 aa).

The N-terminal stretch at 1–22 (MISKYCLFVIVLGTTGTALVLT) is a signal peptide.

As to expression, component of the organic matrix of calcified shell layers like nacre and prisms.

Its subcellular location is the secreted. This chain is Mytilin-1, found in Mytilus galloprovincialis (Mediterranean mussel).